The sequence spans 884 residues: Translation initiation factor IF-2 (884 aa).

The segment at valine 93–glutamine 288 is disordered. The segment covering glutamate 99–tryptophan 209 has biased composition (basic and acidic residues). Positions glutamine 216 to histidine 229 are enriched in polar residues. The segment covering arginine 231 to arginine 246 has biased composition (basic and acidic residues). Residues serine 247–asparagine 261 are compositionally biased toward basic residues. Residues lysine 262 to alanine 275 are compositionally biased toward basic and acidic residues. The tr-type G domain maps to histidine 383–lysine 552. A G1 region spans residues glycine 392–threonine 399. Residue glycine 392–threonine 399 participates in GTP binding. The interval glycine 417–histidine 421 is G2. The tract at residues aspartate 438–glycine 441 is G3. GTP contacts are provided by residues aspartate 438–histidine 442 and asparagine 492–aspartate 495. The segment at asparagine 492–aspartate 495 is G4. The G5 stretch occupies residues serine 528–lysine 530.

Belongs to the TRAFAC class translation factor GTPase superfamily. Classic translation factor GTPase family. IF-2 subfamily.

It is found in the cytoplasm. Functionally, one of the essential components for the initiation of protein synthesis. Protects formylmethionyl-tRNA from spontaneous hydrolysis and promotes its binding to the 30S ribosomal subunits. Also involved in the hydrolysis of GTP during the formation of the 70S ribosomal complex. The chain is Translation initiation factor IF-2 from Yersinia pestis bv. Antiqua (strain Antiqua).